The following is a 163-amino-acid chain: Mediator of RNA polymerase II transcription subunit 10 (163 aa).

The interval A57–P79 is disordered. Residues Y63–G72 are compositionally biased toward polar residues.

This sequence belongs to the Mediator complex subunit 10 family. Component of the Mediator complex.

It is found in the nucleus. Functionally, component of the Mediator complex, a coactivator involved in the regulated transcription of nearly all RNA polymerase II-dependent genes. Mediator functions as a bridge to convey information from gene-specific regulatory proteins to the basal RNA polymerase II transcription machinery. Mediator is recruited to promoters by direct interactions with regulatory proteins and serves as a scaffold for the assembly of a functional preinitiation complex with RNA polymerase II and the general transcription factors. In Coccidioides immitis (strain RS) (Valley fever fungus), this protein is Mediator of RNA polymerase II transcription subunit 10 (NUT2).